Reading from the N-terminus, the 389-residue chain is MPMTDFLFTSESVSEGHPDKVADQVSDAILDAILDQDRQSRVACETMVTTGMAVIAGEITTNARVEYPKVVREVIRDIGYNDSAMGFDWETCAVLTSIDRQSPDISQGVTEGAGLFKEQGAGDQGLMFGYACDETSVLMPMPITYAHQLTQRMSEVRKSGLLTFLRPDSKSQVSVQYINDKPVRVDTVVVSSQHAPDVAYETLREALIEEVIKKVVPADMLDENTKFYVNPTGRFVVGGPQGDCGLTGRKIIVDTYGGQGSHGGGAFSGKDPSKVDRSASYMARYVAKNVVAAKLARKCEVQIAYAIGVAEPVSIMVNTFGTGVLPSNEIARIVREEFDMRPAAIIETLDLLRPIYRKTAAYGHFGRELPEFTWERTDRVDSLRGRAGL.

ATP is bound at residue histidine 17. Aspartate 19 contributes to the Mg(2+) binding site. K(+) is bound at residue glutamate 45. L-methionine contacts are provided by glutamate 58 and glutamine 101. Positions 101 to 111 are flexible loop; it reads QSPDISQGVTE. ATP is bound by residues 168-170, 234-235, aspartate 243, 249-250, alanine 266, and lysine 270; these read DSK, RF, and RK. Aspartate 243 is a binding site for L-methionine. Lysine 274 provides a ligand contact to L-methionine.

The protein belongs to the AdoMet synthase family. As to quaternary structure, homotetramer; dimer of dimers. The cofactor is Mg(2+). K(+) is required as a cofactor.

It localises to the cytoplasm. The enzyme catalyses L-methionine + ATP + H2O = S-adenosyl-L-methionine + phosphate + diphosphate. The protein operates within amino-acid biosynthesis; S-adenosyl-L-methionine biosynthesis; S-adenosyl-L-methionine from L-methionine: step 1/1. Catalyzes the formation of S-adenosylmethionine (AdoMet) from methionine and ATP. The overall synthetic reaction is composed of two sequential steps, AdoMet formation and the subsequent tripolyphosphate hydrolysis which occurs prior to release of AdoMet from the enzyme. The chain is S-adenosylmethionine synthase from Syntrophotalea carbinolica (strain DSM 2380 / NBRC 103641 / GraBd1) (Pelobacter carbinolicus).